A 153-amino-acid polypeptide reads, in one-letter code: ORM1-like protein 1 (153 aa).

Over 1-26 (MNVGVAHSEVNPNTRVMNSRGMWLTY) the chain is Cytoplasmic. 2 consecutive transmembrane segments (helical) span residues 27 to 46 (ALGV…FSVP) and 47 to 67 (VAWT…LHAV). Topologically, residues 68 to 100 (KGTPFETPDQGKARLLTHWEQLDYGVQFTSSRK) are cytoplasmic. A helical transmembrane segment spans residues 101 to 121 (FLTISPIILYFLASFYTKYDP). Residues 122–123 (TH) are Extracellular-facing. The helical transmembrane segment at 124–144 (FFINTASLLSVLIPKLPQLHG) threads the bilayer. Topologically, residues 145–153 (VRIFGINKY) are cytoplasmic.

This sequence belongs to the ORM family. Ceramide-sensitive subunit of the serine palmitoyltransferase (SPT) complex, which is also composed of SPTLC1, SPTLC2/3 and SPTSSA/B.

It localises to the endoplasmic reticulum membrane. Functionally, plays an essential role in the homeostatic regulation of sphingolipid de novo biosynthesis by modulating the activity of the serine palmitoyltransferase (SPT) in response to ceramide levels. When complexed to SPT, the binding of ceramides to its N-terminus stabilizes a conformation that block SPT substrate entry, hence preventing SPT catalytic activity. Through this mechanism, maintains ceramide levels at sufficient concentrations for the production of complex sphingolipids, but which prevents the accumulation of ceramides to levels that trigger apoptosis. The protein is ORM1-like protein 1 (ormdl1) of Xenopus laevis (African clawed frog).